Reading from the N-terminus, the 354-residue chain is N-acylethanolamine-hydrolyzing acid amidase (354 aa).

Residues 1–22 (MRSPGIVLLLLLLLLLPPGAAP) form the signal peptide. Asn35 and Asn104 each carry an N-linked (GlcNAc...) asparagine glycan. Cys123 (nucleophile) is an active-site residue. 3 N-linked (GlcNAc...) asparagine glycosylation sites follow: Asn306, Asn312, and Asn352.

The protein belongs to the acid ceramidase family. Heterodimer of an alpha and a beta subunit, produced by autocatalytic cleavage. In terms of processing, N-glycosylated. Tunicamycin treatment causes a reduction in specific activity against N-palmitoylethanolamine. Autoproteolytic cleavage at pH 4.5 gives rise to the alpha and beta subunit. Cleavage gives rise to a conformation change that activates the enzyme. The same catalytic Cys residue mediates the autoproteolytic cleavage and subsequent hydrolysis of lipid substrates.

The protein localises to the lysosome. It is found in the membrane. The catalysed reaction is N-hexadecanoylethanolamine + H2O = ethanolamine + hexadecanoate. It catalyses the reaction an N-(long-chain fatty acyl)ethanolamine + H2O = a long-chain fatty acid + ethanolamine. The enzyme catalyses N-dodecanoylethanolamine + H2O = dodecanoate + ethanolamine. It carries out the reaction N-tetradecanoylethanolamine + H2O = tetradecanoate + ethanolamine. The catalysed reaction is an N-acylsphing-4-enine + H2O = sphing-4-enine + a fatty acid. It catalyses the reaction N-hexadecanoylsphing-4-enine + H2O = sphing-4-enine + hexadecanoate. The enzyme catalyses N-dodecanoylsphing-4-enine + H2O = dodecanoate + sphing-4-enine. It functions in the pathway lipid metabolism; fatty acid metabolism. Degrades bioactive fatty acid amides to their corresponding acids, with the following preference: N-palmitoylethanolamine &gt; N-myristoylethanolamine &gt; N-stearoylethanolamine &gt; N-oleoylethanolamine &gt; N-linoleoylethanolamine &gt; N-arachidonoylethanolamine. The chain is N-acylethanolamine-hydrolyzing acid amidase from Cavia porcellus (Guinea pig).